A 69-amino-acid chain; its full sequence is MKILTIEYASSSLRLSNSVHSGLFSIYLSNSSHLNASTNLGSSFCLHADGTPIVLRTKITSLPLIAASI.

This is an uncharacterized protein from Vaccinia virus (strain Western Reserve) (VACV).